The sequence spans 602 residues: Elongation factor 4 (602 aa).

A tr-type G domain is found at 8-189; it reads KNIRNFSIIA…KIITTIPAPS (182 aa). Residues 20 to 25 and 136 to 139 contribute to the GTP site; these read DHGKST and NKID.

Belongs to the TRAFAC class translation factor GTPase superfamily. Classic translation factor GTPase family. LepA subfamily.

Its subcellular location is the cell inner membrane. It catalyses the reaction GTP + H2O = GDP + phosphate + H(+). Its function is as follows. Required for accurate and efficient protein synthesis under certain stress conditions. May act as a fidelity factor of the translation reaction, by catalyzing a one-codon backward translocation of tRNAs on improperly translocated ribosomes. Back-translocation proceeds from a post-translocation (POST) complex to a pre-translocation (PRE) complex, thus giving elongation factor G a second chance to translocate the tRNAs correctly. Binds to ribosomes in a GTP-dependent manner. The sequence is that of Elongation factor 4 from Helicobacter pylori (strain Shi470).